The primary structure comprises 283 residues: Transmembrane protein 119 (283 aa).

The N-terminal stretch at Met1–Ala25 is a signal peptide. At Arg26–Met96 the chain is on the extracellular side. O-linked (Xyl...) (chondroitin sulfate) serine glycosylation occurs at Ser41. Low complexity predominate over residues Glu43–Pro52. The interval Glu43–Gly76 is disordered. Residues Leu97 to Ile117 traverse the membrane as a helical segment. Residues Thr118–Val283 are Cytoplasmic-facing. 2 disordered regions span residues Lys136–Ser168 and Leu183–Val283. Basic and acidic residues-rich tracts occupy residues Val153–Glu164 and Arg198–Gln213. Residues Gly238–Gln264 are compositionally biased toward low complexity. Ser272 is modified (phosphoserine).

Interacts with SMAD1, SMAD5 and RUNX2. In terms of tissue distribution, expressed in brain microglia (at protein level). Detected in urine (at protein level). Elevated expression levels seen in the brain of patients with Alzheimer disease. Expressed by osteoblast-like cells in bone tissues and follicular dendritic cells in lymphoid tissues.

It localises to the cell membrane. The protein localises to the cytoplasm. Its subcellular location is the endoplasmic reticulum membrane. The protein resides in the secreted. Its function is as follows. Plays an important role in bone formation and normal bone mineralization. Promotes the differentiation of myoblasts into osteoblasts. May induce the commitment and differentiation of myoblasts into osteoblasts through an enhancement of BMP2 production and interaction with the BMP-RUNX2 pathway. Up-regulates the expression of ATF4, a transcription factor which plays a central role in osteoblast differentiation. Essential for normal spermatogenesis and late testicular differentiation. In Homo sapiens (Human), this protein is Transmembrane protein 119 (TMEM119).